A 147-amino-acid polypeptide reads, in one-letter code: Receptor activity-modifying protein 3 (147 aa).

Positions methionine 1–alanine 22 are cleaved as a signal peptide. At glutamine 23–aspartate 112 the chain is on the extracellular side. 4 N-linked (GlcNAc...) asparagine glycosylation sites follow: asparagine 28, asparagine 57, asparagine 70, and asparagine 102. 2 disulfide bridges follow: cysteine 39-cysteine 71 and cysteine 56-cysteine 103. The chain crosses the membrane as a helical span at residues proline 113–valine 137. Residues tryptophan 138–leucine 147 lie on the Cytoplasmic side of the membrane.

Belongs to the RAMP family. In terms of assembly, heterodimer of CALCRL and RAMP3; interaction induces allosteric modulation of CALCRL function and ligand specificity for adrenomedullin/ADM and intermedin/ADM2. Heterodimer of CALCR and RAMP3; interaction form the receptor complex AMYR3 for amylin/IAPP. Interacts with GPER1.

The protein resides in the cell membrane. The protein localises to the membrane. Its function is as follows. Accessory protein that interacts with and modulates the function of G-protein coupled receptors including calcitonin gene-related peptide type 1 receptor (CALCRL), calcitonin receptor (CALCR) and G-protein coupled estrogen receptor 1 (GPER1). Required for the transport of CALCRL and GPER1 receptors to the plasma membrane. Plays a role in cardioprotection by reducing cardiac hypertrophy and perivascular fibrosis in a GPER1-dependent manner. Together with CALCRL, form a receptor complex for adrenomedullin/ADM and intermedin/ADM2. Together with CALCR, act as a receptor complex for amylin/IAPP. The chain is Receptor activity-modifying protein 3 from Rattus norvegicus (Rat).